The chain runs to 387 residues: 3-hydroxyisobutyryl-CoA hydrolase-like protein 5 (387 aa).

At A2 the chain carries N-acetylalanine.

This sequence belongs to the enoyl-CoA hydratase/isomerase family.

The chain is 3-hydroxyisobutyryl-CoA hydrolase-like protein 5 from Arabidopsis thaliana (Mouse-ear cress).